Consider the following 560-residue polypeptide: Long-chain-fatty-acid--CoA ligase (560 aa).

The protein belongs to the ATP-dependent AMP-binding enzyme family.

It carries out the reaction a long-chain fatty acid + ATP + CoA = a long-chain fatty acyl-CoA + AMP + diphosphate. In Bacillus subtilis (strain 168), this protein is Long-chain-fatty-acid--CoA ligase (lcfA).